Consider the following 152-residue polypeptide: Deoxyuridine 5'-triphosphate nucleotidohydrolase (152 aa).

Substrate is bound by residues 71–73 (RSG), N84, and 88–90 (TID).

This sequence belongs to the dUTPase family. Mg(2+) serves as cofactor.

The enzyme catalyses dUTP + H2O = dUMP + diphosphate + H(+). The protein operates within pyrimidine metabolism; dUMP biosynthesis; dUMP from dCTP (dUTP route): step 2/2. In terms of biological role, this enzyme is involved in nucleotide metabolism: it produces dUMP, the immediate precursor of thymidine nucleotides and it decreases the intracellular concentration of dUTP so that uracil cannot be incorporated into DNA. This Roseobacter denitrificans (strain ATCC 33942 / OCh 114) (Erythrobacter sp. (strain OCh 114)) protein is Deoxyuridine 5'-triphosphate nucleotidohydrolase.